Here is a 438-residue protein sequence, read N- to C-terminus: Trigger factor (438 aa).

Residues 163–249 enclose the PPIase FKBP-type domain; that stretch reads EDFVLIDYEG…LKEIRKQILP (87 aa).

This sequence belongs to the FKBP-type PPIase family. Tig subfamily.

It localises to the cytoplasm. It carries out the reaction [protein]-peptidylproline (omega=180) = [protein]-peptidylproline (omega=0). Involved in protein export. Acts as a chaperone by maintaining the newly synthesized protein in an open conformation. Functions as a peptidyl-prolyl cis-trans isomerase. The chain is Trigger factor from Desulfatibacillum aliphaticivorans.